Reading from the N-terminus, the 408-residue chain is RNA-splicing ligase RtcB1 (408 aa).

Mn(2+)-binding residues include D75, C78, H168, H185, and H281. 167–171 contributes to the GMP binding site; sequence NHFIE. GMP contacts are provided by residues 281-282, 313-316, S320, 337-340, and K407; these read HN, PGSM, and HGAG. The active-site GMP-histidine intermediate is the H337.

This sequence belongs to the RtcB family. In terms of assembly, monomer. Mn(2+) serves as cofactor.

The catalysed reaction is a 3'-end 3'-phospho-ribonucleotide-RNA + a 5'-end dephospho-ribonucleoside-RNA + GTP = a ribonucleotidyl-ribonucleotide-RNA + GMP + diphosphate. It carries out the reaction a 3'-end 2',3'-cyclophospho-ribonucleotide-RNA + a 5'-end dephospho-ribonucleoside-RNA + GTP + H2O = a ribonucleotidyl-ribonucleotide-RNA + GMP + diphosphate + H(+). Functionally, GTP-dependent RNA ligase that is involved in RNA repair. Joins RNA with 2',3'-cyclic-phosphate or 3'-phosphate ends to RNA with 5'-hydroxy ends. GTP-dependent RNA ligase that is involved in tRNA repair. Repairs broken tRNA(Asp) and tRNA(Arg) that have been cleaved by colicin E5 or colicin D, respectively. Does not repair damaged 16S rRNA in 30S ribosomal subunits. This is RNA-splicing ligase RtcB1 from Escherichia coli (strain ATCC 25922 / DSM 1103 / LMG 8223 / NCIMB 12210 / NCTC 12241 / WDCM 00013 / Seattle 1946).